The following is a 342-amino-acid chain: uncharacterized protein (342 aa).

9 to 31 (LIFGGTTGIGLMTTIDFIIHNTS) lines the NADP(+) pocket. Ser-208 lines the substrate pocket. Tyr-222 serves as the catalytic Proton acceptor.

This sequence belongs to the short-chain dehydrogenases/reductases (SDR) family.

This is an uncharacterized protein from Acanthamoeba polyphaga (Amoeba).